The following is a 406-amino-acid chain: Ascaroside receptor GPR2 (406 aa).

The Extracellular portion of the chain corresponds to 1-29; sequence MTQLPYLLDRRGGALAAPATAWGDMMLNR. Residues 30 to 50 traverse the membrane as a helical segment; sequence ALFSVALLSSVGSAWVVLSYA. Residues 51 to 61 are Cytoplasmic-facing; that stretch reads CIKELRSYRHQ. A helical transmembrane segment spans residues 62–82; the sequence is LILGLAISDLLMSLNFMFSAG. The Extracellular portion of the chain corresponds to 83–107; the sequence is WNVAGGDLALEESRTACSVNGFLTQ. Cys99 and Cys173 form a disulfide bridge. Residues 108–128 traverse the membrane as a helical segment; sequence VFVVQTDWWILVIAIATYIIL. Topologically, residues 129 to 143 are cytoplasmic; that stretch reads GNFKTQSQFIQTHVW. Residues 144–164 form a helical membrane-spanning segment; that stretch reads IPWVGPWVLSIIIAAICHGVL. Residues 165–185 are Extracellular-facing; it reads GYGYIGGWCWLTSDLMRLLIN. A helical transmembrane segment spans residues 186 to 206; the sequence is FIPRWLIVIAIALIYIRLYMI. Topologically, residues 207 to 326 are cytoplasmic; that stretch reads VRKARKWDIE…AAQLKRIAKK (120 aa). A helical membrane pass occupies residues 327-347; the sequence is MMVYPVAYAIIWACPTAIRIY. Over 348–356 the chain is Extracellular; that stretch reads QGTTGSRAP. Residues 357-377 form a helical membrane-spanning segment; it reads LWITIVDKSCIVIQGLVDAVV. The Cytoplasmic segment spans residues 378–406; sequence YGLNERAWQGWRDHIRRIIYKNEGGRIIG.

The protein belongs to the G-protein coupled receptor 1 family. As to quaternary structure, interacts with ascaroside receptor GPR3; may form a functional heterodimer. Interacts with guanine nucleotide-binding protein alpha GPA2; to activate adenylate cyclase and positively regulate nematode trap formation.

It localises to the cell membrane. Its function is as follows. G protein-coupled receptor that senses nematode ascaroside pheromones and signals via adenylate cyclase to positively regulate trap formation for nematode capture. The polypeptide is Ascaroside receptor GPR2 (Arthrobotrys oligospora (strain ATCC 24927 / CBS 115.81 / DSM 1491) (Nematode-trapping fungus)).